The primary structure comprises 409 residues: Probable ferredoxin reductase CtmF (409 aa).

FAD contacts are provided by A15, D37, K50, V83, D279, and V298.

Belongs to the FAD-dependent oxidoreductase family. The cofactor is FAD.

The protein operates within terpene metabolism; monoterpene degradation. In terms of biological role, involved in the degradation of the cyclic monoterpene limonene. Probably part of an electron transfer system involved in the oxidation of limonene to perillyl alcohol. The sequence is that of Probable ferredoxin reductase CtmF from Castellaniella defragrans (strain DSM 12143 / CCUG 39792 / 65Phen) (Alcaligenes defragrans).